The primary structure comprises 517 residues: MAEKFFLKGEDKVNMEGVLGSEAVEFFSWSASNHMLTEFTSSRGDLGVQQALCKIVEGSDWTYAIYWQVAKSKSGKSALIWGDGHCRETKIGQGEGANDSAHQKMMDGNKKKMVLQKIHTCFGGSEDDNIAAKLESVSDVEVFYLTSMYYIFPFDKPSSPSQSFNSARSIWGSDLKGCLEHFQSRSYLAKLARFETLVFVPLKSGVVELGSVKSIPEDQNLIQMVKTSVVVSNPPQPKANTKIFGRELSLGGAKSGPISINFSPKVEEELSFASDSYEVQAALGSSQVYGNSSNGYRSDEGEGKLYKEELDERKPRKRGRKPANGREEALNHVEAERQRREKLNQRFYALRAVVPNISKMDKASLLGDAIAYITDLQARIRVLDAEKEMVGDKQKQQVILEIDFHQRQDDAVVRVGCPLNAHPVSRVLKTFQEHQVVAQESNVSLTENGELVHMFSIRAPGPAAEDLKEKLTAASRFALKTRWSVSVIRLLCFARLFVYEHQCLAGKFALYFVDYTI.

Positions 290-331 are disordered; that stretch reads GNSSNGYRSDEGEGKLYKEELDERKPRKRGRKPANGREEALN. Positions 297–314 are enriched in basic and acidic residues; sequence RSDEGEGKLYKEELDERK. The tract at residues 327–340 is basic motif; degenerate; it reads EEALNHVEAERQRR. Positions 327–376 constitute a bHLH domain; the sequence is EEALNHVEAERQRREKLNQRFYALRAVVPNISKMDKASLLGDAIAYITDL. Residues 341-376 are helix-loop-helix motif; the sequence is EKLNQRFYALRAVVPNISKMDKASLLGDAIAYITDL.

It is found in the nucleus. Transcription factor that negatively regulates jasmonate (JA) signaling. Negatively regulates JA-dependent response to wounding, JA-induced expression of defense genes, JA-dependent responses against herbivorous insects, and JA-dependent resistance against Botrytis cinerea infection. Plays a positive role in resistance against the bacterial pathogen Pseudomonas syringae pv tomato DC3000. In Solanum lycopersicum (Tomato), this protein is Transcription factor MTB3.